A 1457-amino-acid chain; its full sequence is MVVSAGPWSSEKAEMNILEINEKLRPQLAENKQQFRNLKERCFLTQLAGFLANRQKKYKYEECKDLIKFMLRNERQFKEEKLAEQLKQAEELRQYKVLVHSQERELTQLREKLREGRDASRSLNEHLQALLTPDEPDKSQGQDLQEQLAEGCRLAQQLVQKLSPENDEDEDEDVQVEEDEKVLESSAPREVQKAEESKVPEDSLEECAITCSNSHGPCDSIQPHKNIKITFEEDKVNSTVVVDRKSSHDECQDALNILPVPGPTSSATNVSMVVSAGPLSSEKAEMNILEINEKLRPQLAEKKQQFRSLKEKCFVTQLAGFLAKQQNKYKYEECKDLIKSMLRNELQFKEEKLAEQLKQAEELRQYKVLVHSQERELTQLREKLREGRDASRSLNEHLQALLTPDEPDKSQGQDLQEQLAEGCRLAQHLVQKLSPENDEDEDEDVQVEEDEKVLESSSPREMQKAEESKVPEDSLEECAITCSNSHGPCDSNQPHKNIKITFEEDKVNSSLVVDRESSHDECQDALNILPVPGPTSSATNVSMVVSAGPLSSEKAEMNILEINEKLRPQLAEKKQQFRSLKEKCFVTQVACFLAKQQNKYKYEECKDLLKSMLRNELQFKEEKLAEQLKQAEELRQYKVLVHSQERELTQLREKLREGRDASRSLNEHLQALLTPDEPDKSQGQDLQEQLAEGCRLAQHLVQKLSPENDNDDDEDVQVEVAEKVQKSSSPREMQKAEEKEVPEDSLEECAITCSNSHGPYDSNQPHRKTKITFEEDKVDSTLIGSSSHVEWEDAVHIIPENESDDEEEEEKGPVSPRNLQESEEEEVPQESWDEGYSTLSIPPERLASYQSYSSTFHSLEEQQVCMAVDIGRHRWDQVKKEDQEATGPRLSRELLAEKEPEVLQDSLDRCYSTPSVYLGLTDSCQPYRSAFYVLEQQRVGLAVDMDEIEKYQEVEEDQDPSCPRLSRELLAEKEPEVLQDSLDRCYSTPSGYLELPDLGQPYRSAVYSLEEQYLGLALDVDRIKKDQEEEEDQGPPCPRLSRELLEVVEPEVLQDSLDRCYSTPSSCLEQPDSCQPYRSSFYALEEKHVGFSLDVGEIEKKGKGKKRRGRRSKKKRRRGRKEGEEDQNPPCPRLSRELLAEKEPEVLQDSLDRWYSTPSVYLGLTDPCQPYRSAFYVLEQQRVGLAVDMDEIEKYQEVEEDQDPSCPRLSRELLAEKEPEVLQDSLDRCYSTPSGYLELPDLGQPYRSAVYSLEEQYLGLALDVDRIKKDQEEEEDQGPPCPRLSRELLEVVEPEVLQDSLDRCYSTPSSCLEQPDSCQPYRSSFYALEEKHVGFSLDVGEIEKKGKGKKRRGRRSKKKRRRGRKEGEEDQNPPCPRLNSVLMEVEEPEVLQDSLDRCYSTPSMYFELPDSFQHYRSVFYSFEEQHITFALDMDNSFFTLTVTSLHLVFQMGVIFPQ.

Residues 75 to 119 (RQFKEEKLAEQLKQAEELRQYKVLVHSQERELTQLREKLREGRDA) adopt a coiled-coil conformation. Positions 162-200 (LSPENDEDEDEDVQVEEDEKVLESSAPREVQKAEESKVP) are disordered. Positions 165-181 (ENDEDEDEDVQVEEDEK) are enriched in acidic residues. One can recognise an Olduvai 1 domain in the interval 165-259 (ENDEDEDEDV…ECQDALNILP (95 aa)). Residues 190-200 (EVQKAEESKVP) are compositionally biased toward basic and acidic residues. Positions 339–390 (KSMLRNELQFKEEKLAEQLKQAEELRQYKVLVHSQERELTQLREKLREGRDA) form a coiled coil. The tract at residues 432 to 472 (KLSPENDEDEDEDVQVEEDEKVLESSSPREMQKAEESKVPE) is disordered. Over residues 436–452 (ENDEDEDEDVQVEEDEK) the composition is skewed to acidic residues. One can recognise an Olduvai 2 domain in the interval 436-530 (ENDEDEDEDV…ECQDALNILP (95 aa)). The span at 461-472 (EMQKAEESKVPE) shows a compositional bias: basic and acidic residues. Residues 610 to 661 (KSMLRNELQFKEEKLAEQLKQAEELRQYKVLVHSQERELTQLREKLREGRDA) adopt a coiled-coil conformation. Olduvai domains lie at 707-799 (ENDN…HIIP), 800-871 (ENES…VDIG), 872-963 (RHRW…PSCP), 966-1021 (SREL…LDVD), 1022-1114 (RIKK…RSKK), 1115-1207 (KRRR…PSCP), 1210-1265 (SREL…LDVD), 1266-1358 (RIKK…RSKK), and 1359-1457 (KRRR…IFPQ). 2 disordered regions span residues 721-746 (AEKVQKSSSPREMQKAEEKEVPEDSL) and 791-838 (WEDA…GYST). Acidic residues-rich tracts occupy residues 801–810 (NESDDEEEEE) and 821–833 (ESEEEEVPQESWD). The disordered stretch occupies residues 1100-1139 (KKGKGKKRRGRRSKKKRRRGRKEGEEDQNPPCPRLSRELL). Positions 1102-1120 (GKGKKRRGRRSKKKRRRGR) are enriched in basic residues. The tract at residues 1344–1378 (KKGKGKKRRGRRSKKKRRRGRKEGEEDQNPPCPRL) is disordered. A compositionally biased stretch (basic residues) spans 1346-1364 (GKGKKRRGRRSKKKRRRGR).

This sequence belongs to the NBPF family. As to expression, widely expressed with highest levels in brain, ovary, mammary gland, skin and adipose tissue. Also expressed in testis. Detected in a number of tumors including osteosarcoma, mammary carcinoma and hepatocellular carcinoma.

It is found in the cytoplasm. This Homo sapiens (Human) protein is NBPF family member NBPF12.